The chain runs to 482 residues: 2-succinylbenzoate--CoA ligase (482 aa).

This sequence belongs to the ATP-dependent AMP-binding enzyme family. MenE subfamily.

The enzyme catalyses 2-succinylbenzoate + ATP + CoA = 2-succinylbenzoyl-CoA + AMP + diphosphate. It functions in the pathway quinol/quinone metabolism; 1,4-dihydroxy-2-naphthoate biosynthesis; 1,4-dihydroxy-2-naphthoate from chorismate: step 5/7. It participates in quinol/quinone metabolism; menaquinone biosynthesis. In terms of biological role, converts 2-succinylbenzoate (OSB) to 2-succinylbenzoyl-CoA (OSB-CoA). The protein is 2-succinylbenzoate--CoA ligase of Bacillus anthracis (strain A0248).